Consider the following 289-residue polypeptide: Enoyl-CoA hydratase domain-containing protein 3, mitochondrial (289 aa).

The transit peptide at 1-14 (MLLRGFSELLKCRG) directs the protein to the mitochondrion.

The protein belongs to the enoyl-CoA hydratase/isomerase family.

Its subcellular location is the mitochondrion. Its function is as follows. May play a role in fatty acid biosynthesis and insulin sensitivity. The sequence is that of Enoyl-CoA hydratase domain-containing protein 3, mitochondrial (echdc3) from Danio rerio (Zebrafish).